The sequence spans 141 residues: Lutropin subunit beta (141 aa).

Positions 1–20 (MEMLQGLLLWLLLSMGGARA) are cleaved as a signal peptide. 6 disulfides stabilise this stretch: C29-C77, C43-C92, C46-C130, C54-C108, C58-C110, and C113-C120. Residues N33 and N50 are each glycosylated (N-linked (GlcNAc...) asparagine).

This sequence belongs to the glycoprotein hormones subunit beta family. Heterodimer of a common alpha chain and a unique beta chain which confers biological specificity to thyrotropin, lutropin, follitropin and gonadotropin.

The protein localises to the secreted. Functionally, promotes spermatogenesis and ovulation by stimulating the testes and ovaries to synthesize steroids. The protein is Lutropin subunit beta (LHB) of Macaca fascicularis (Crab-eating macaque).